The primary structure comprises 260 residues: Homeobox-leucine zipper protein HOX25 (260 aa).

Residues 1 to 10 (MEDLVDELYG) show a composition bias toward acidic residues. Disordered regions lie at residues 1-24 (MEDL…ARKR), 121-145 (ANGK…PESA), and 190-221 (SPES…YPSS). A DNA-binding region (homeobox) is located at residues 19–79 (AAARKRRLTA…NRRARWKTKQ (61 aa)). The tract at residues 78 to 122 (KQLELDFDRLRAAHDELLAGRAALAADNESLRSQVILLTEKLQAN) is leucine-zipper. Positions 205-218 (SEDDCGGAGSDDDY) are enriched in acidic residues.

The protein belongs to the HD-ZIP homeobox family. Class I subfamily. Expressed in roots, leaf sheaths and blades and panicles.

Its subcellular location is the nucleus. Its function is as follows. Probable transcription factor. The protein is Homeobox-leucine zipper protein HOX25 (HOX25) of Oryza sativa subsp. indica (Rice).